The following is a 234-amino-acid chain: Serum amyloid P-component (234 aa).

A signal peptide spans 1–22 (MDKLLSLLGVSILAGLLLEAFA). A Pentraxin (PTX) domain is found at 27–226 (TGKVFVFPRQ…YAVIRPRCVA (200 aa)). N54 carries an N-linked (GlcNAc...) asparagine glycan. C58 and C117 are joined by a disulfide. Residues N81, E158, Q159, D160, and Q170 each contribute to the Ca(2+) site.

This sequence belongs to the pentraxin family. As to quaternary structure, homopentamer. Pentraxin (or pentaxin) have a discoid arrangement of 5 non-covalently bound subunits. Ca(2+) serves as cofactor.

It localises to the secreted. This Mesocricetus auratus (Golden hamster) protein is Serum amyloid P-component (APCS).